A 436-amino-acid chain; its full sequence is Tol-Pal system protein TolB (436 aa).

The N-terminal stretch at 1–28 (MRSFLKPLLTIAAMALGMTAVIPMPAWA) is a signal peptide.

It belongs to the TolB family. As to quaternary structure, the Tol-Pal system is composed of five core proteins: the inner membrane proteins TolA, TolQ and TolR, the periplasmic protein TolB and the outer membrane protein Pal. They form a network linking the inner and outer membranes and the peptidoglycan layer.

It is found in the periplasm. Its function is as follows. Part of the Tol-Pal system, which plays a role in outer membrane invagination during cell division and is important for maintaining outer membrane integrity. The protein is Tol-Pal system protein TolB of Mesorhizobium japonicum (strain LMG 29417 / CECT 9101 / MAFF 303099) (Mesorhizobium loti (strain MAFF 303099)).